The chain runs to 70 residues: Large ribosomal subunit protein bL31 (70 aa).

Zn(2+) contacts are provided by Cys16, Cys18, Cys37, and Cys40.

Belongs to the bacterial ribosomal protein bL31 family. Type A subfamily. As to quaternary structure, part of the 50S ribosomal subunit. Zn(2+) serves as cofactor.

In terms of biological role, binds the 23S rRNA. This Shewanella frigidimarina (strain NCIMB 400) protein is Large ribosomal subunit protein bL31.